Consider the following 199-residue polypeptide: 7-methyl-GTP pyrophosphatase (199 aa).

D76 serves as the catalytic Proton acceptor.

The protein belongs to the Maf family. YceF subfamily. Requires a divalent metal cation as cofactor.

The protein localises to the cytoplasm. The enzyme catalyses N(7)-methyl-GTP + H2O = N(7)-methyl-GMP + diphosphate + H(+). Functionally, nucleoside triphosphate pyrophosphatase that hydrolyzes 7-methyl-GTP (m(7)GTP). May have a dual role in cell division arrest and in preventing the incorporation of modified nucleotides into cellular nucleic acids. The sequence is that of 7-methyl-GTP pyrophosphatase from Rhizobium meliloti (strain 1021) (Ensifer meliloti).